Reading from the N-terminus, the 371-residue chain is tRNA-specific 2-thiouridylase MnmA (371 aa).

ATP-binding positions include A7–S14 and L33. C101 functions as the Nucleophile in the catalytic mechanism. C101 and C213 are disulfide-bonded. G125 serves as a coordination point for ATP. Residues K163–Q165 form an interaction with tRNA region. Catalysis depends on C213, which acts as the Cysteine persulfide intermediate.

The protein belongs to the MnmA/TRMU family.

The protein resides in the cytoplasm. It catalyses the reaction S-sulfanyl-L-cysteinyl-[protein] + uridine(34) in tRNA + AH2 + ATP = 2-thiouridine(34) in tRNA + L-cysteinyl-[protein] + A + AMP + diphosphate + H(+). Functionally, catalyzes the 2-thiolation of uridine at the wobble position (U34) of tRNA, leading to the formation of s(2)U34. The sequence is that of tRNA-specific 2-thiouridylase MnmA from Roseiflexus castenholzii (strain DSM 13941 / HLO8).